A 71-amino-acid polypeptide reads, in one-letter code: uncharacterized protein (71 aa).

A Sm domain is found at 15–71 (PNFEYARRLNGKKVKIFLRNGEVLDAEVTGVSNYEIMVKVGDRNLLVFKHAIDYIEY).

This is an uncharacterized protein from Methanocaldococcus jannaschii (strain ATCC 43067 / DSM 2661 / JAL-1 / JCM 10045 / NBRC 100440) (Methanococcus jannaschii).